We begin with the raw amino-acid sequence, 536 residues long: Pre-mRNA 3'-end-processing factor FIP1 (536 aa).

Basic and acidic residues-rich tracts occupy residues 1–10 (MSAGEVERLV) and 32–42 (VHVHSDLAKDL). Disordered stretches follow at residues 1–95 (MSAG…EDDV), 212–246 (VQQG…GLPP), and 300–536 (FPPG…APAE). Positions 1–110 (MSAGEVERLV…DIKTGAPQYG (110 aa)) are sufficient for interaction with PAPOLA. The tract at residues 1–296 (MSAGEVERLV…TEVDNNFSKP (296 aa)) is necessary for stimulating PAPOLA activity. Acidic residues-rich tracts occupy residues 43–54 (DENEVERPEEEN) and 80–94 (TEDD…DEDD). 3 positions are modified to phosphoserine: serine 84, serine 86, and serine 88. The segment at 136–219 (KGVDLDAPGS…ITVQQGRTGN (84 aa)) is sufficient for interaction with CPSF4. The span at 300–344 (FPPGAPPTHLPPPPFLPPPPTVSTAPPLIPPPGFPPPPGAPPPSL) shows a compositional bias: pro residues. Tyrosine 366 is modified (phosphotyrosine). Over residues 374–390 (LTSSAPSWPSLVDTTKQ) the composition is skewed to polar residues. Residues 383–536 (SLVDTTKQWD…QESTEAAPAE (154 aa)) are sufficient for interaction with CPSF1 and CSTF3. The segment covering 394 to 434 (YARREKDRDRDRERDRDRERERDRDRERERTRERERERDHS) has biased composition (basic and acidic residues). Residues 397–432 (REKDRDRDRERDRDRERERDRDRERERTRERERERD) are arg/Asp/Glu-rich domain. Residue serine 434 is modified to Phosphoserine. A Phosphothreonine modification is found at threonine 436. Phosphoserine occurs at positions 438 and 442. A compositionally biased stretch (basic and acidic residues) spans 443-470 (DEERYRYREYAERGYERHRASREKEERH). A compositionally biased stretch (basic residues) spans 484–493 (KSSRSNSRRR). A Phosphoserine modification is found at serine 496. A compositionally biased stretch (basic residues) spans 502–512 (HRRHKHKKSKR).

This sequence belongs to the FIP1 family. As to quaternary structure, component of the cleavage and polyadenylation specificity factor (CPSF) complex, composed of CPSF1, CPSF2, CPSF3, CPSF4 and FIP1L1. Found in a complex with CPSF1, FIP1L1 and PAPOLA. Interacts with CPSF1, CPSF4, CSTF2 and CSTF3. Interacts with AHCYL1 (when phosphorylated); the interaction is direct and associates AHCYL1 with the CPSF complex and RNA. Interacts with PAPOLA; the interaction seems to be increased by the interaction with AHCYL1. Interacts with NUDT21/CPSF5; this interaction occurs in a RNA sequence-specific manner. Interacts (preferentially via unphosphorylated form and Arg/Glu/Asp-rich domain) with CPSF6 (via Arg/Ser-rich domain); this interaction mediates, at least in part, the interaction between the CFIm and CPSF complexes and may be inhibited by CPSF6 hyper-phosphorylation. Interacts (preferentially via unphosphorylated form and Arg/Asp/Glu-rich domain) with CPSF7 (via Arg/Ser-rich domain); this interaction mediates, at least in part, the interaction between the CFIm and CPSF complexes and may be inhibited by CPSF7 hyper-phosphorylation.

The protein localises to the nucleus. Functionally, component of the cleavage and polyadenylation specificity factor (CPSF) complex that plays a key role in pre-mRNA 3'-end formation, recognizing the AAUAAA signal sequence and interacting with poly(A) polymerase and other factors to bring about cleavage and poly(A) addition. FIP1L1 contributes to poly(A) site recognition and stimulates poly(A) addition. Binds to U-rich RNA sequence elements surrounding the poly(A) site. May act to tether poly(A) polymerase to the CPSF complex. The polypeptide is Pre-mRNA 3'-end-processing factor FIP1 (Fip1l1) (Rattus norvegicus (Rat)).